We begin with the raw amino-acid sequence, 156 residues long: Small ribosomal subunit protein uS7 (156 aa).

This sequence belongs to the universal ribosomal protein uS7 family. In terms of assembly, part of the 30S ribosomal subunit. Contacts proteins S9 and S11.

One of the primary rRNA binding proteins, it binds directly to 16S rRNA where it nucleates assembly of the head domain of the 30S subunit. Is located at the subunit interface close to the decoding center, probably blocks exit of the E-site tRNA. This chain is Small ribosomal subunit protein uS7, found in Pseudomonas fluorescens (strain ATCC BAA-477 / NRRL B-23932 / Pf-5).